The primary structure comprises 367 residues: Flagellar P-ring protein (367 aa).

The N-terminal stretch at 1–21 (MYVFKALAGIVLALVATLAHA) is a signal peptide.

The protein belongs to the FlgI family. In terms of assembly, the basal body constitutes a major portion of the flagellar organelle and consists of four rings (L,P,S, and M) mounted on a central rod.

Its subcellular location is the periplasm. It localises to the bacterial flagellum basal body. Its function is as follows. Assembles around the rod to form the L-ring and probably protects the motor/basal body from shearing forces during rotation. The chain is Flagellar P-ring protein from Salmonella choleraesuis (strain SC-B67).